A 66-amino-acid polypeptide reads, in one-letter code: Large ribosomal subunit protein bL35 (66 aa).

Over residues 1–24 the composition is skewed to basic residues; the sequence is MPKQKTHRGAAKRFKKTGSGKLKR. The tract at residues 1–26 is disordered; it reads MPKQKTHRGAAKRFKKTGSGKLKRDH.

It belongs to the bacterial ribosomal protein bL35 family.

This chain is Large ribosomal subunit protein bL35, found in Bacillus cytotoxicus (strain DSM 22905 / CIP 110041 / 391-98 / NVH 391-98).